The primary structure comprises 363 residues: MARSLTILAIVFAVATARVTKSESPKEILAQVNKDSFGNSILSVLQLQLATGGPVGEIQILLNNIASQLNGDQKKADKVHESDTVAFEKIIADLEQEIAYHQTQIVALSNLRDSTTEALGEAEVEVRVVTSDIANNEKSFADESATRQSQHDTWVRKDAEHVDQMEAIDEASKIVQHLQAGVAFAQLKSRFEKVQAKLMESKHALFKPLINALTQLASKVDNKSIIKILELLAQIRQQLVASRASLLATEERQAANWEVQSSHLSEEHKRLVERKAFLENSIVQFKVTIQEAVEDLEDQTLFLEDAEDSLAIQERWAAEQESQYEAQTFEREQQLEVVERLQEVLTQKLSAASEFLQVREEVF.

The first 17 residues, 1–17, serve as a signal peptide directing secretion; the sequence is MARSLTILAIVFAVATA. Residues 18 to 52 constitute a propeptide that is removed on maturation; it reads RVTKSESPKEILAQVNKDSFGNSILSVLQLQLATG. Residues 85 to 119 adopt a coiled-coil conformation; that stretch reads VAFEKIIADLEQEIAYHQTQIVALSNLRDSTTEAL. A propeptide spanning residues 190–221 is cleaved from the precursor; that stretch reads RFEKVQAKLMESKHALFKPLINALTQLASKVD. Positions 244–352 form a coiled coil; it reads ASLLATEERQ…EVLTQKLSAA (109 aa).

It belongs to the TMP family. Two components are produced by post-translational processing from the precursor peptide.

The protein resides in the trichocyst. Structural protein that crystallize inside the trichocyst matrix. The chain is Trichocyst matrix protein T4-B (T4B) from Paramecium tetraurelia.